We begin with the raw amino-acid sequence, 150 residues long: Male-specific protein scotti (150 aa).

The segment at 60–84 (PPMAVFPARGGPNGGPPRLRKKRSF) is disordered. A glycan (N-linked (GlcNAc...) asparagine) is linked at asparagine 131.

It belongs to the male-specific scotti family.

Functionally, post-meiotically transcribed gene that has a role in late spermiogenesis; required for actin cone progression during spermatid individualization. This chain is Male-specific protein scotti, found in Drosophila yakuba (Fruit fly).